The chain runs to 494 residues: Serine/arginine-rich splicing factor 4 (494 aa).

Residues 2-72 form the RRM 1 domain; it reads PRVYIGRLSY…ERVIVEHARG (71 aa). Disordered stretches follow at residues 72 to 95 and 169 to 494; these read GPRR…GRDK and KIRL…HSRS. A phosphoserine mark is found at Ser78 and Ser84. The RRM 2 domain maps to 104–177; that stretch reads YRLIVENLSS…RKIRLVEDKP (74 aa). Basic residues-rich tracts occupy residues 179 to 206 and 214 to 246; these read SRRR…KSRS and SHSK…KKEK. Positions 247-256 are enriched in basic and acidic residues; sequence SRSPSKEKSR. Positions 257–267 are enriched in basic residues; it reads SRSHSAGKSRS. Basic and acidic residues predominate over residues 268 to 278; sequence KSKDQAEEKIQ. Residues 286-302 show a composition bias toward basic residues; it reads PKSRSPSRHKSKSKSRS. Residues Ser288, Ser290, and Ser292 each carry the phosphoserine modification. The segment covering 303 to 327 has biased composition (basic and acidic residues); that stretch reads RSQERRVEEEKRGSVSRGRSQEKSL. Composition is skewed to basic residues over residues 328–359 and 367–382; these read RQSR…GRKR and RSRS…KRGS. Residues 411–431 show a composition bias toward basic and acidic residues; the sequence is VSKEREHAKSESSQREGRGES. Phosphoserine is present on residues Ser431, Ser446, Ser456, Ser458, and Ser460. A compositionally biased stretch (low complexity) spans 449–460; that stretch reads KSKPNLPSESRS. A compositionally biased stretch (basic residues) spans 461–494; that stretch reads RSKSASKTRSRSKSRSRSASRSPSRSRSRSHSRS.

The protein belongs to the splicing factor SR family. Found in a pre-mRNA splicing complex with SRSF4/SFRS4, SRSF5/SFRS5, SNRNP70, SNRPA1, SRRM1 and SRRM2. Interacts with PNN. In terms of processing, extensively phosphorylated on serine residues in the RS domain.

It is found in the nucleus speckle. Plays a role in alternative splice site selection during pre-mRNA splicing. Represses the splicing of MAPT/Tau exon 10. The polypeptide is Serine/arginine-rich splicing factor 4 (SRSF4) (Homo sapiens (Human)).